A 356-amino-acid polypeptide reads, in one-letter code: 1-deoxy-D-xylulose 5-phosphate reductoisomerase (356 aa).

NADPH is bound by residues T7, G8, S9, I10, G31, N33, and N111. K112 is a binding site for 1-deoxy-D-xylulose 5-phosphate. E113 is an NADPH binding site. D131 serves as a coordination point for Mn(2+). 1-deoxy-D-xylulose 5-phosphate contacts are provided by S132, E133, S155, and H178. E133 serves as a coordination point for Mn(2+). G184 is an NADPH binding site. The 1-deoxy-D-xylulose 5-phosphate site is built by S191, N196, K197, and E200. E200 contributes to the Mn(2+) binding site.

It belongs to the DXR family. Requires Mg(2+) as cofactor. Mn(2+) is required as a cofactor.

The enzyme catalyses 2-C-methyl-D-erythritol 4-phosphate + NADP(+) = 1-deoxy-D-xylulose 5-phosphate + NADPH + H(+). It participates in isoprenoid biosynthesis; isopentenyl diphosphate biosynthesis via DXP pathway; isopentenyl diphosphate from 1-deoxy-D-xylulose 5-phosphate: step 1/6. Functionally, catalyzes the NADPH-dependent rearrangement and reduction of 1-deoxy-D-xylulose-5-phosphate (DXP) to 2-C-methyl-D-erythritol 4-phosphate (MEP). The chain is 1-deoxy-D-xylulose 5-phosphate reductoisomerase from Campylobacter jejuni (strain RM1221).